Here is a 901-residue protein sequence, read N- to C-terminus: Valine--tRNA ligase (901 aa).

The short motif at 536-540 is the 'KMSKS' region element; that stretch reads KLSKS. Lys-539 contributes to the ATP binding site. The stretch at 831 to 901 forms a coiled coil; the sequence is LEGLISFEKE…KLQGNLEVLS (71 aa).

This sequence belongs to the class-I aminoacyl-tRNA synthetase family. ValS type 1 subfamily. Monomer.

Its subcellular location is the cytoplasm. It carries out the reaction tRNA(Val) + L-valine + ATP = L-valyl-tRNA(Val) + AMP + diphosphate. Its function is as follows. Catalyzes the attachment of valine to tRNA(Val). As ValRS can inadvertently accommodate and process structurally similar amino acids such as threonine, to avoid such errors, it has a 'posttransfer' editing activity that hydrolyzes mischarged Thr-tRNA(Val) in a tRNA-dependent manner. The protein is Valine--tRNA ligase of Chlorobaculum tepidum (strain ATCC 49652 / DSM 12025 / NBRC 103806 / TLS) (Chlorobium tepidum).